We begin with the raw amino-acid sequence, 1026 residues long: Multidrug resistance protein MdtC (1026 aa).

Transmembrane regions (helical) follow at residues 15 to 35, 333 to 353, 360 to 380, 387 to 407, 431 to 451, 463 to 483, 528 to 548, 853 to 873, 897 to 917, 953 to 973, and 984 to 1004; these read ILIA…LPVA, EVEE…FLFL, LIPA…MYLC, LSLM…IVVL, VGFT…PLLL, FAVT…TLTP, LVGV…IAIP, LILI…LYES, LFNA…IGIV, PIMM…LSGG, and ITIV…TPVV.

The protein belongs to the resistance-nodulation-cell division (RND) (TC 2.A.6) family. MdtC subfamily. Part of a tripartite efflux system composed of MdtA, MdtB and MdtC. MdtC forms a heteromultimer with MdtB.

It is found in the cell inner membrane. The polypeptide is Multidrug resistance protein MdtC (Salmonella gallinarum (strain 287/91 / NCTC 13346)).